Here is a 359-residue protein sequence, read N- to C-terminus: Type-1 angiotensin II receptor A (359 aa).

At 1-25 (MALNSSAEDGIKRIQDDCPKAGRHS) the chain is on the extracellular side. N-linked (GlcNAc...) asparagine glycosylation occurs at Asn-4. Angiotensin II-binding residues include Gln-15 and Asp-17. 2 cysteine pairs are disulfide-bonded: Cys-18–Cys-274 and Cys-101–Cys-180. The chain crosses the membrane as a helical span at residues 26-55 (YIFVMIPTLYSIIFVVGIFGNSLVVIVIYF). At 56–61 (YMKLKT) the chain is on the cytoplasmic side. Residues 62 to 89 (VASVFLLNLALADLCFLLTLPLWAVYTA) form a helical membrane-spanning segment. Over 90–98 (MEYRWPFGN) the chain is Extracellular. The chain crosses the membrane as a helical span at residues 99 to 125 (HLCKIASASVSFNLYASVFLLTCLSID). Residues 126–141 (RYLAIVHPMKSRLRRT) are Cytoplasmic-facing. Residues 142 to 165 (MLVAKVTCIIIWLMAGLASLPAVI) traverse the membrane as a helical segment. Over 166–190 (HRNVYFIENTNITVCAFHYESRNST) the chain is Extracellular. Residue Arg-167 participates in angiotensin II binding. N-linked (GlcNAc...) asparagine glycosylation occurs at Asn-176. Angiotensin II-binding residues include Phe-182, His-183, and Tyr-184. N-linked (GlcNAc...) asparagine glycosylation occurs at Asn-188. Residues 191–216 (LPIGLGLTKNILGFLFPFLIILTSYT) traverse the membrane as a helical segment. An angiotensin II-binding site is contributed by Lys-199. Residues 217 to 239 (LIWKALKKAYEIQKNKPRNDDIF) are Cytoplasmic-facing. The chain crosses the membrane as a helical span at residues 240–268 (RIIMAIVLFFFFSWVPHQIFTFLDVLIQL). The Extracellular segment spans residues 269-278 (GVIHDCKISD). A helical transmembrane segment spans residues 279-304 (IVDTAMPITICIAYFNNCLNPLFYGF). The Cytoplasmic segment spans residues 305–359 (LGKKFKKYFLQLLKYIPPKAKSHSSLSTKMSTLSYRPSDNMSSSAKKPASCFEVE). Residues 337–349 (LSYRPSDNMSSSA) are compositionally biased toward polar residues. A disordered region spans residues 337 to 359 (LSYRPSDNMSSSAKKPASCFEVE). A lipid anchor (S-palmitoyl cysteine) is attached at Cys-355.

Belongs to the G-protein coupled receptor 1 family. Interacts with MAS1. Interacts with ARRB1. Interacts with FLNA (via filamin repeat 21); increases PKA-mediated phosphorylation of FLNA. C-terminal Ser or Thr residues may be phosphorylated. As to expression, is expressed in the liver, kidney, aorta, lung, uterus, ovary, spleen, heart, adrenal gland, and vascular smooth muscle cell.

The protein resides in the cell membrane. In terms of biological role, receptor for angiotensin II, a vasoconstricting peptide, which acts as a key regulator of blood pressure and sodium retention by the kidney. The activated receptor in turn couples to G-alpha proteins G(q) (GNAQ, GNA11, GNA14 or GNA15) and thus activates phospholipase C and increases the cytosolic Ca(2+) concentrations, which in turn triggers cellular responses such as stimulation of protein kinase C. The protein is Type-1 angiotensin II receptor A (Agtr1) of Rattus norvegicus (Rat).